A 125-amino-acid chain; its full sequence is Fatty acid-binding protein, liver-type (125 aa).

It belongs to the calycin superfamily. Fatty-acid binding protein (FABP) family.

It is found in the cytoplasm. This Takifugu rubripes (Japanese pufferfish) protein is Fatty acid-binding protein, liver-type (fabp1).